The following is a 132-amino-acid chain: MRHSVLSISFAVALFLECYTPSTAIPIGKMDDVALEQDTLDSLLRVEVSENSPDSVRGRSSKIVLLADSGLWMNLNRGLPLYKLIAAAAGPDRALTLDRREAGQDLSPSISIVRRDTMRCMVGRVYRPCWEV.

An N-terminal signal peptide occupies residues 1–24; it reads MRHSVLSISFAVALFLECYTPSTA. Residues Cys120 and Cys129 are joined by a disulfide bond.

The protein belongs to the melanin-concentrating hormone family. In terms of tissue distribution, pituitary gland. Produced in neurons of lateral basal hypothalamus which project both to the brain and to the neural lobe of the pituitary gland from where MCH is released.

Functionally, plays a role in skin pigmentation by antagonizing the action of melanotropin alpha. Induces melanin concentration within the melanophores. May participate in the control of the hypothalamo-pituitary adrenal gland axis by inhibiting the release of ACTH. In Oncorhynchus mykiss (Rainbow trout), this protein is Pro-MCH 1 (mch1).